Reading from the N-terminus, the 85-residue chain is Serine protease inhibitor Kazal-type 7 (85 aa).

The signal sequence occupies residues 1–19; it reads MKITGGLLLLCTVVYFCSS. The 60-residue stretch at 26-85 folds into the Kazal-like domain; the sequence is SPKKVDCSIYKKYPVVAIPCPITYLPVCGSDYITYGNECHLCTESLKSNGRVQFLHDGSC. Disulfide bonds link Cys-32–Cys-67, Cys-45–Cys-64, and Cys-53–Cys-85.

The protein localises to the secreted. Its function is as follows. Probable serine protease inhibitor. The polypeptide is Serine protease inhibitor Kazal-type 7 (SPINK7) (Homo sapiens (Human)).